Consider the following 1052-residue polypeptide: Malignant fibrous histiocytoma-amplified sequence 1 (1052 aa).

Alanine 2 is subject to N-acetylalanine. LRR repeat units lie at residues 64–85 (DIEA…LGSA), 88–109 (SLRV…VAEL), 112–133 (HLTE…VVSA), 136–157 (ELRK…LGAL), 159–180 (HLEE…LSCL), 182–203 (RLRT…LLQL), 205–226 (ALEE…ISAL), 228–249 (ALKI…FCEL), 251–272 (SLES…FSCL), 274–296 (RLKM…LPLA), 297–318 (GLEE…ISGL), 320–341 (RLLT…IVEL), and 343–364 (GLEE…FGQL). The tract at residues 64–364 (DIEALNLGNN…AVLPDHFGQL (301 aa)) is required for interaction with PJA2. The required for interaction with PPP2R2A stretch occupies residues 64–649 (DIEALNLGNN…DKLLSVAEHR (586 aa)). A Roc domain is found at 403-649 (QPAVQPRLKL…DKLLSVAEHR (247 aa)). The residue at position 601 (lysine 601) is an N6-acetyllysine.

In terms of assembly, interacts with RAF1. Interacts with HSPD1. Interacts with PPP2CA; retains PPP2CA into the cytoplasm and excludes it from the nucleus. Interacts with PPP2R2A; the interaction is direct. Interacts with PJA2. In terms of processing, ubiquitinated. Ubiquitination by PJA2 does not lead MFHAS1 to proteasomal degradation but positively regulates its function in polarization of macrophages. Ubiquitously expressed. Overexpressed in malignant fibrous histiocytomas. Expressed in red blood cells (at protein level).

The protein localises to the cytoplasm. Probable GTP-binding protein. Functions in innate immunity and more specifically the inflammatory response as a regulator of the Toll-like receptor TLR2 and TLR4 signaling pathways. Negatively regulates the part of the TLR4 signaling pathway that leads to the activation of the transcription factor AP-1. By retaining the phosphatase complex PP2A into the cytoplasm, prevents the dephosphorylation of the AP-1 subunit JUN which is required for proper activation of the transcription factor. Both inhibits and activates the TLR2-dependent signaling pathway. Positively regulates the TLR2 signaling pathway to activate specifically the downstream p38 and JNK MAP kinases and promote the polarization of macrophages toward the pro-inflammatory M1 phenotype. It may also play a role in the regulation of inflammation induced by high glucose through the PKB/AKT signaling pathway. Also involved in erythrocyte differentiation through activation of the ERK1/ERK2 signaling pathway. In Homo sapiens (Human), this protein is Malignant fibrous histiocytoma-amplified sequence 1.